The chain runs to 938 residues: Protein translocase subunit SecA (938 aa).

ATP contacts are provided by residues Gln-90, 108-112 (GEGKT), and Asp-504.

This sequence belongs to the SecA family. In terms of assembly, monomer and homodimer. Part of the essential Sec protein translocation apparatus which comprises SecA, SecYEG and auxiliary proteins SecDF. Other proteins may also be involved.

Its subcellular location is the cell inner membrane. It is found in the cellular thylakoid membrane. The protein resides in the cytoplasm. It carries out the reaction ATP + H2O + cellular proteinSide 1 = ADP + phosphate + cellular proteinSide 2.. Its function is as follows. Part of the Sec protein translocase complex. Interacts with the SecYEG preprotein conducting channel. Has a central role in coupling the hydrolysis of ATP to the transfer of proteins into and across the cell membrane, serving as an ATP-driven molecular motor driving the stepwise translocation of polypeptide chains across the membrane. In terms of biological role, probably participates in protein translocation into and across both the cytoplasmic and thylakoid membranes in cyanobacterial cells. In Picosynechococcus sp. (strain ATCC 27264 / PCC 7002 / PR-6) (Agmenellum quadruplicatum), this protein is Protein translocase subunit SecA.